The chain runs to 362 residues: Methylthioribose-1-phosphate isomerase (362 aa).

Catalysis depends on Asp-252, which acts as the Proton donor.

It belongs to the eIF-2B alpha/beta/delta subunits family. MtnA subfamily.

It is found in the cytoplasm. Its subcellular location is the nucleus. The enzyme catalyses 5-(methylsulfanyl)-alpha-D-ribose 1-phosphate = 5-(methylsulfanyl)-D-ribulose 1-phosphate. It participates in amino-acid biosynthesis; L-methionine biosynthesis via salvage pathway; L-methionine from S-methyl-5-thio-alpha-D-ribose 1-phosphate: step 1/6. Functionally, catalyzes the interconversion of methylthioribose-1-phosphate (MTR-1-P) into methylthioribulose-1-phosphate (MTRu-1-P). The sequence is that of Methylthioribose-1-phosphate isomerase from Drosophila mojavensis (Fruit fly).